The following is a 491-amino-acid chain: Putative diacyglycerol O-acyltransferase MT2557 (491 aa).

Residue histidine 145 is the Proton acceptor of the active site.

Belongs to the long-chain O-acyltransferase family.

It catalyses the reaction an acyl-CoA + a 1,2-diacyl-sn-glycerol = a triacyl-sn-glycerol + CoA. Its pathway is glycerolipid metabolism; triacylglycerol biosynthesis. The protein is Putative diacyglycerol O-acyltransferase MT2557 of Mycobacterium tuberculosis (strain CDC 1551 / Oshkosh).